The sequence spans 199 residues: Protein P1 (199 aa).

The sequence is that of Protein P1 from Rice tungro bacilliform virus (isolate Philippines) (RTBV).